Here is a 218-residue protein sequence, read N- to C-terminus: NAD(P)H-hydrate epimerase (218 aa).

Residues 9–215 (MKKIDQYAID…DIGIPQKAIR (207 aa)) form the YjeF N-terminal domain. 55-59 (NNGAD) contributes to the (6S)-NADPHX binding site. 2 residues coordinate K(+): Asn-56 and Asp-127. (6S)-NADPHX contacts are provided by residues 131–137 (GTGLNRT) and Asp-160. Residue Ser-163 participates in K(+) binding.

It belongs to the NnrE/AIBP family. K(+) serves as cofactor.

It catalyses the reaction (6R)-NADHX = (6S)-NADHX. The enzyme catalyses (6R)-NADPHX = (6S)-NADPHX. In terms of biological role, catalyzes the epimerization of the S- and R-forms of NAD(P)HX, a damaged form of NAD(P)H that is a result of enzymatic or heat-dependent hydration. This is a prerequisite for the S-specific NAD(P)H-hydrate dehydratase to allow the repair of both epimers of NAD(P)HX. This is NAD(P)H-hydrate epimerase from Anaerococcus prevotii (strain ATCC 9321 / DSM 20548 / JCM 6508 / NCTC 11806 / PC1) (Peptostreptococcus prevotii).